A 222-amino-acid polypeptide reads, in one-letter code: Small ribosomal subunit protein uS3 (222 aa).

Residues 39–108 enclose the KH type-2 domain; it reads IRRHIKEKLY…TISLDIKEIK (70 aa).

It belongs to the universal ribosomal protein uS3 family. In terms of assembly, part of the 30S ribosomal subunit. Forms a tight complex with proteins S10 and S14.

Binds the lower part of the 30S subunit head. Binds mRNA in the 70S ribosome, positioning it for translation. This Caldicellulosiruptor saccharolyticus (strain ATCC 43494 / DSM 8903 / Tp8T 6331) protein is Small ribosomal subunit protein uS3.